Consider the following 187-residue polypeptide: NADH-quinone oxidoreductase subunit B (187 aa).

Residues Cys-66, Cys-67, Cys-131, and Cys-161 each coordinate [4Fe-4S] cluster.

Belongs to the complex I 20 kDa subunit family. NDH-1 is composed of 14 different subunits. Subunits NuoB, C, D, E, F, and G constitute the peripheral sector of the complex. [4Fe-4S] cluster serves as cofactor.

It localises to the cell inner membrane. The enzyme catalyses a quinone + NADH + 5 H(+)(in) = a quinol + NAD(+) + 4 H(+)(out). Functionally, NDH-1 shuttles electrons from NADH, via FMN and iron-sulfur (Fe-S) centers, to quinones in the respiratory chain. Couples the redox reaction to proton translocation (for every two electrons transferred, four hydrogen ions are translocated across the cytoplasmic membrane), and thus conserves the redox energy in a proton gradient. The sequence is that of NADH-quinone oxidoreductase subunit B from Rhizorhabdus wittichii (strain DSM 6014 / CCUG 31198 / JCM 15750 / NBRC 105917 / EY 4224 / RW1) (Sphingomonas wittichii).